Reading from the N-terminus, the 211-residue chain is Protein-L-isoaspartate O-methyltransferase (211 aa).

Ser-60 is an active-site residue.

Belongs to the methyltransferase superfamily. L-isoaspartyl/D-aspartyl protein methyltransferase family.

It localises to the cytoplasm. The catalysed reaction is [protein]-L-isoaspartate + S-adenosyl-L-methionine = [protein]-L-isoaspartate alpha-methyl ester + S-adenosyl-L-homocysteine. In terms of biological role, catalyzes the methyl esterification of L-isoaspartyl residues in peptides and proteins that result from spontaneous decomposition of normal L-aspartyl and L-asparaginyl residues. It plays a role in the repair and/or degradation of damaged proteins. The protein is Protein-L-isoaspartate O-methyltransferase of Hahella chejuensis (strain KCTC 2396).